The chain runs to 223 residues: uncharacterized protein (223 aa).

Helical transmembrane passes span 25–45 (TYFL…ATMA), 46–66 (IGIS…ILFF), 78–98 (LVWT…MLNF), 105–125 (GPIV…GLSA), 140–160 (FLFA…FVGS), 161–181 (TVAH…FILF), and 199–219 (ISMY…LGIM).

This sequence belongs to the BI1 family.

It localises to the cell membrane. This is an uncharacterized protein from Vibrio cholerae serotype O1 (strain ATCC 39315 / El Tor Inaba N16961).